Reading from the N-terminus, the 320-residue chain is MAETLQLNSTFLHPNFFILTGFPGLGSAQTWLTLVFGPIYLLALLGNGALPAVVWIDSTLHQPMFLLLAILAATDLGLATSIAPGLLAVLWLGPRSVPYAVCLVQMFFVHALTAMESGVLLAMACDRAAAIGRPLHYPVLVTKACVGYAALALALKAVAIVVPFPLLVAKFEHFQAKTIGHTYCAHMAVVELVVGNTQATNLYGLALSLAISGMDILGITGSYGLIAHAVLQLPTREAHAKAFGTCSSHICVILAFYIPGLFSYLTHRFGHHTVPKPVHILLSNIYLLLPPALNPLIYGARTKQIRDRLLETFTFRKSPL.

Residues 1–30 (MAETLQLNSTFLHPNFFILTGFPGLGSAQT) lie on the Extracellular side of the membrane. N-linked (GlcNAc...) asparagine glycosylation occurs at Asn8. A helical membrane pass occupies residues 31–51 (WLTLVFGPIYLLALLGNGALP). The Cytoplasmic segment spans residues 52–59 (AVVWIDST). The helical transmembrane segment at 60–80 (LHQPMFLLLAILAATDLGLAT) threads the bilayer. Residues 81 to 104 (SIAPGLLAVLWLGPRSVPYAVCLV) are Extracellular-facing. Residues 105 to 125 (QMFFVHALTAMESGVLLAMAC) traverse the membrane as a helical segment. At 126 to 144 (DRAAAIGRPLHYPVLVTKA) the chain is on the cytoplasmic side. The chain crosses the membrane as a helical span at residues 145–165 (CVGYAALALALKAVAIVVPFP). The Extracellular portion of the chain corresponds to 166 to 201 (LLVAKFEHFQAKTIGHTYCAHMAVVELVVGNTQATN). The chain crosses the membrane as a helical span at residues 202–222 (LYGLALSLAISGMDILGITGS). Topologically, residues 223–242 (YGLIAHAVLQLPTREAHAKA) are cytoplasmic. The helical transmembrane segment at 243–263 (FGTCSSHICVILAFYIPGLFS) threads the bilayer. Topologically, residues 264–279 (YLTHRFGHHTVPKPVH) are extracellular. Residues 280-300 (ILLSNIYLLLPPALNPLIYGA) form a helical membrane-spanning segment. Residues 301–320 (RTKQIRDRLLETFTFRKSPL) are Cytoplasmic-facing.

Belongs to the G-protein coupled receptor 1 family.

The protein localises to the cell membrane. Functionally, odorant receptor. The polypeptide is Olfactory receptor 52W1 (OR52W1) (Homo sapiens (Human)).